The following is a 1456-amino-acid chain: Macrophage mannose receptor 1 (1456 aa).

An N-terminal signal peptide occupies residues 1–18; sequence MRLPLLLVFASVIPGAVL. Residues 19-1389 are Extracellular-facing; sequence LLDTRQFLIY…DPSKPSSNVA (1371 aa). In terms of domain architecture, Ricin B-type lectin spans 22–142; it reads TRQFLIYNED…SGLWSRWKIY (121 aa). Disulfide bonds link Cys-35–Cys-49 and Cys-74–Cys-91. N-linked (GlcNAc...) asparagine glycosylation occurs at Asn-104. Residues 163–211 form the Fibronectin type-II domain; the sequence is ANGATCAFPFKFENKWYADCTSAGRSDGWLWCGTTTDYDTDKLFGYCPL. Disulfide bonds link Cys-168–Cys-194, Cys-182–Cys-209, Cys-247–Cys-340, and Cys-316–Cys-332. Positions 225–341 constitute a C-type lectin 1 domain; that stretch reads LTSVSYQINS…CVQKLGYICK (117 aa). Asn-344 is a glycosylation site (N-linked (GlcNAc...) asparagine). 4 consecutive C-type lectin domains span residues 369–487, 511–626, 655–778, and 807–923; these read YAGH…YICK, HHFY…FVCK, RTSL…WICQ, and YKDY…FICQ. 2 disulfides stabilise this stretch: Cys-391–Cys-486 and Cys-463–Cys-478. Asn-529 carries N-linked (GlcNAc...) asparagine glycosylation. Cystine bridges form between Cys-532–Cys-625, Cys-600–Cys-617, Cys-646–Cys-659, Cys-680–Cys-777, Cys-753–Cys-769, Cys-828–Cys-922, and Cys-899–Cys-914. 2 N-linked (GlcNAc...) asparagine glycosylation sites follow: Asn-926 and Asn-930. C-type lectin domains lie at 952 to 1080, 1102 to 1213, and 1241 to 1356; these read YSNK…YICQ, YGKS…FLCK, and FHGH…YICK. 6 disulfide bridges follow: Cys-977–Cys-1079, Cys-1052–Cys-1071, Cys-1123–Cys-1212, Cys-1190–Cys-1204, Cys-1263–Cys-1355, and Cys-1332–Cys-1347. Asn-1160 carries an N-linked (GlcNAc...) asparagine glycan. Asn-1205 is a glycosylation site (N-linked (GlcNAc...) asparagine). A helical membrane pass occupies residues 1390-1410; sequence GVVIIVILLILTGAGLAAYFF. At 1411–1456 the chain is on the cytoplasmic side; the sequence is YKKRRVHLPQEGAFENTLYFNSQSSPGTSDMKDLVGNIEQNEHSVI.

In terms of assembly, (Microbial infection) Interacts with Dengue virus. As to quaternary structure, (Microbial infection) May act as a receptor for hepatitis B virus, enabling uptake of the virus in hepatic dendritic cells.

The protein resides in the endosome membrane. The protein localises to the cell membrane. In terms of biological role, mediates the endocytosis of glycoproteins by macrophages. Binds both sulfated and non-sulfated polysaccharide chains. Functionally, (Microbial infection) Acts as a phagocytic receptor for bacteria, fungi and other pathogens. Its function is as follows. (Microbial infection) Acts as a receptor for Dengue virus envelope protein E. (Microbial infection) Interacts with Hepatitis B virus envelope protein. The sequence is that of Macrophage mannose receptor 1 (MRC1) from Homo sapiens (Human).